A 225-amino-acid chain; its full sequence is UPF0128 protein PH1314 (225 aa).

Belongs to the UPF0128 family.

This is UPF0128 protein PH1314 from Pyrococcus horikoshii (strain ATCC 700860 / DSM 12428 / JCM 9974 / NBRC 100139 / OT-3).